Reading from the N-terminus, the 420-residue chain is Cytochrome c biogenesis protein Ccs1 (420 aa).

Transmembrane regions (helical) follow at residues 12–32 (LRFS…GTVI), 71–91 (TWWF…CTFL), and 157–177 (IAPI…IVGS).

This sequence belongs to the Ccs1/CcsB family. May interact with CcsA.

Its subcellular location is the plastid. It is found in the chloroplast thylakoid membrane. Functionally, required during biogenesis of c-type cytochromes (cytochrome c6 and cytochrome f) at the step of heme attachment. The protein is Cytochrome c biogenesis protein Ccs1 of Phaeodactylum tricornutum (strain CCAP 1055/1).